Reading from the N-terminus, the 1249-residue chain is Voltage-dependent calcium channel unc-36 (1249 aa).

The first 19 residues, 1 to 19 (MRVVHLLVVLATYVSTTSS), serve as a signal peptide directing secretion. At 20-1228 (FNKESIKECA…SENERRPCST (1209 aa)) the chain is on the extracellular side. N-linked (GlcNAc...) asparagine glycosylation is found at N100, N140, N146, N302, N520, N558, N757, N838, N903, N923, and N1130. A VWFA domain is found at 250–479 (NVLIMLDMSG…EKIHHYIRRM (230 aa)). The helical transmembrane segment at 1229–1248 (SPTIVSIFQILFGVFLHFCI) threads the bilayer. F1249 is a topological domain (cytoplasmic).

As to expression, decendants of the cells AB and AB.p (that give rise to nearly all non-pharyngeal neurons), decendants of P1 (that give rise to body muscle) and cell lineages that give rise to the adult and juvenile motor neurons. Expressed in body wall, vulval muscle and pharyngeal muscle.

The protein localises to the membrane. May act as an auxiliary subunit of the unc-2 voltage-gated calcium channel which appears to trigger calcium-activated signaling pathways that control the serotonin response. Inhibiting serotonin sensitivity of the vulval muscles results in egg laying defects. May act in both neurons and muscle cells to enhance motor activity as it is required for coordinated movement. Has a role in neural depolarization-induced calcium influx and pharyngeal pumping. Involved in restricting the expression of the putative olfactory receptor str-2 to only one of the two AWC neurons. The sequence is that of Voltage-dependent calcium channel unc-36 (unc-36) from Caenorhabditis elegans.